We begin with the raw amino-acid sequence, 179 residues long: Large ribosomal subunit protein uL5 (179 aa).

It belongs to the universal ribosomal protein uL5 family. As to quaternary structure, part of the 50S ribosomal subunit; part of the 5S rRNA/L5/L18/L25 subcomplex. Contacts the 5S rRNA and the P site tRNA. Forms a bridge to the 30S subunit in the 70S ribosome.

Its function is as follows. This is one of the proteins that bind and probably mediate the attachment of the 5S RNA into the large ribosomal subunit, where it forms part of the central protuberance. In the 70S ribosome it contacts protein S13 of the 30S subunit (bridge B1b), connecting the 2 subunits; this bridge is implicated in subunit movement. Contacts the P site tRNA; the 5S rRNA and some of its associated proteins might help stabilize positioning of ribosome-bound tRNAs. This is Large ribosomal subunit protein uL5 from Serratia proteamaculans (strain 568).